The sequence spans 405 residues: Pentatricopeptide repeat-containing protein At1g11630, mitochondrial (405 aa).

The transit peptide at 1 to 72 (MAFLFRIRTS…RSTSLSPDYH (72 aa)) directs the protein to the mitochondrion. PPR repeat units lie at residues 74-108 (DRII…QPDP), 110-144 (SESF…EIPR), 145-180 (TVKS…GIEP), 181-215 (DLET…WIKP), 216-250 (TAAS…GVHV), 251-285 (GVAT…RMRP), 286-320 (NSVT…GYKP), 321-355 (DSEC…NWVP), and 356-386 (SFSV…VKEK).

Belongs to the PPR family. P subfamily.

The protein resides in the mitochondrion. This is Pentatricopeptide repeat-containing protein At1g11630, mitochondrial from Arabidopsis thaliana (Mouse-ear cress).